Here is a 318-residue protein sequence, read N- to C-terminus: Phosphatidylglycerol--prolipoprotein diacylglyceryl transferase (318 aa).

The next 7 membrane-spanning stretches (helical) occupy residues 23 to 43, 59 to 79, 98 to 118, 124 to 146, 192 to 212, 219 to 239, and 253 to 273; these read PLTI…GAWL, MDII…YHVI, IWEG…GAAI, GVRL…AMGR, FQPT…LLVF, LGAG…RFIF, and LRVN…VFLI. An a 1,2-diacyl-sn-glycero-3-phospho-(1'-sn-glycerol)-binding site is contributed by Arg146. Basic and acidic residues predominate over residues 293-312; the sequence is FDTRANGHDPEKHDETDGKG. The interval 293–318 is disordered; sequence FDTRANGHDPEKHDETDGKGNRHHVP.

This sequence belongs to the Lgt family.

The protein resides in the cell membrane. The enzyme catalyses L-cysteinyl-[prolipoprotein] + a 1,2-diacyl-sn-glycero-3-phospho-(1'-sn-glycerol) = an S-1,2-diacyl-sn-glyceryl-L-cysteinyl-[prolipoprotein] + sn-glycerol 1-phosphate + H(+). Its pathway is protein modification; lipoprotein biosynthesis (diacylglyceryl transfer). In terms of biological role, catalyzes the transfer of the diacylglyceryl group from phosphatidylglycerol to the sulfhydryl group of the N-terminal cysteine of a prolipoprotein, the first step in the formation of mature lipoproteins. The chain is Phosphatidylglycerol--prolipoprotein diacylglyceryl transferase from Paenarthrobacter aurescens (strain TC1).